Reading from the N-terminus, the 188-residue chain is Peptidyl-tRNA hydrolase (188 aa).

Residue Phe14 participates in tRNA binding. Catalysis depends on His19, which acts as the Proton acceptor. TRNA is bound by residues Tyr64, Asn66, and Asn112.

Belongs to the PTH family. In terms of assembly, monomer.

It is found in the cytoplasm. It carries out the reaction an N-acyl-L-alpha-aminoacyl-tRNA + H2O = an N-acyl-L-amino acid + a tRNA + H(+). Its function is as follows. Hydrolyzes ribosome-free peptidyl-tRNAs (with 1 or more amino acids incorporated), which drop off the ribosome during protein synthesis, or as a result of ribosome stalling. Catalyzes the release of premature peptidyl moieties from peptidyl-tRNA molecules trapped in stalled 50S ribosomal subunits, and thus maintains levels of free tRNAs and 50S ribosomes. In Onion yellows phytoplasma (strain OY-M), this protein is Peptidyl-tRNA hydrolase.